The chain runs to 33 residues: Kappa-theraphotoxin-Pg2a (33 aa).

3 disulfides stabilise this stretch: Cys-2–Cys-16, Cys-9–Cys-21, and Cys-15–Cys-28.

Expressed by the venom gland.

The protein localises to the secreted. Its function is as follows. Gating modifier of Kv2.1/KCNB1 channels. The protein is Kappa-theraphotoxin-Pg2a of Chilobrachys guangxiensis (Chinese earth tiger tarantula).